A 420-amino-acid polypeptide reads, in one-letter code: Threonine aspartase 1 (420 aa).

The tract at residues 1 to 23 is disordered; that stretch reads MTMEKGMSSGEGLPSRSSQVSAG. The Nucleophile role is filled by Thr234.

It belongs to the Ntn-hydrolase family. Intramolecular proteolysis generates 2 subunits, alpha and beta, which reassemble through a non-covalent association to form the fully active enzyme.

Its function is as follows. Protease responsible for KMT2A/MLL1 processing and activation. It also activates KMT2D/MLL2. Through substrate activation, it controls the expression of HOXA genes, and the expression of key cell cycle regulators including CCNA1, CCNB1, CCNE1 and CDKN2A. The polypeptide is Threonine aspartase 1 (TASP1) (Homo sapiens (Human)).